The chain runs to 164 residues: MSKTAQIAVVMGSKSDWATMQEATQILDELNVPYHVEVVSAHRTPDKLFEFAENAQKNGYKVIIAGAGGAAHLPGMIAAKTLVPVLGVPVKSSMLSGVDSLYSIVQMPKGIPVGTLAIGPAGAANAGLLAAQILAGWDDALFTRLQAFRENQTNMVLDNPDPRT.

Substrate contacts are provided by serine 13, aspartate 16, and arginine 43.

The protein belongs to the AIR carboxylase family. Class I subfamily.

It carries out the reaction 5-carboxyamino-1-(5-phospho-D-ribosyl)imidazole + H(+) = 5-amino-1-(5-phospho-D-ribosyl)imidazole-4-carboxylate. Its pathway is purine metabolism; IMP biosynthesis via de novo pathway; 5-amino-1-(5-phospho-D-ribosyl)imidazole-4-carboxylate from 5-amino-1-(5-phospho-D-ribosyl)imidazole (N5-CAIR route): step 2/2. Catalyzes the conversion of N5-carboxyaminoimidazole ribonucleotide (N5-CAIR) to 4-carboxy-5-aminoimidazole ribonucleotide (CAIR). The sequence is that of N5-carboxyaminoimidazole ribonucleotide mutase from Haemophilus influenzae (strain ATCC 51907 / DSM 11121 / KW20 / Rd).